Reading from the N-terminus, the 208-residue chain is N-(5'-phosphoribosyl)anthranilate isomerase (208 aa).

This sequence belongs to the TrpF family.

The catalysed reaction is N-(5-phospho-beta-D-ribosyl)anthranilate = 1-(2-carboxyphenylamino)-1-deoxy-D-ribulose 5-phosphate. It participates in amino-acid biosynthesis; L-tryptophan biosynthesis; L-tryptophan from chorismate: step 3/5. The polypeptide is N-(5'-phosphoribosyl)anthranilate isomerase (Staphylococcus haemolyticus (strain JCSC1435)).